Reading from the N-terminus, the 289-residue chain is Protoheme IX farnesyltransferase (289 aa).

9 helical membrane-spanning segments follow: residues 9 to 29 (VALMKLRVVELLLITTVPVMM), 35 to 55 (MPSLWLIAVTLVAGTLAAGSA), 89 to 109 (LTFGIVIGIVSTLMFGLLVNW), 110 to 130 (PSALLADGAIAFYVFVYTLGL), 138 to 158 (IVIGGAAGCFPVLIGWSAVTG), 164 to 184 (AVLLFAVVFFWTPPHFWALAM), 188 to 208 (DDYAAAGIPMLPVVAPVEVVT), 228 to 248 (VAHTGPVYLVSAVVVGAWFLA), and 269 to 289 (FHMSITYLTLLFVAIAVTAVV).

It belongs to the UbiA prenyltransferase family. Protoheme IX farnesyltransferase subfamily.

Its subcellular location is the cell membrane. The enzyme catalyses heme b + (2E,6E)-farnesyl diphosphate + H2O = Fe(II)-heme o + diphosphate. Its pathway is porphyrin-containing compound metabolism; heme O biosynthesis; heme O from protoheme: step 1/1. In terms of biological role, converts heme B (protoheme IX) to heme O by substitution of the vinyl group on carbon 2 of heme B porphyrin ring with a hydroxyethyl farnesyl side group. The chain is Protoheme IX farnesyltransferase from Frankia alni (strain DSM 45986 / CECT 9034 / ACN14a).